The chain runs to 892 residues: Alanine--tRNA ligase (892 aa).

Histidine 578, histidine 582, cysteine 681, and histidine 685 together coordinate Zn(2+).

The protein belongs to the class-II aminoacyl-tRNA synthetase family. Requires Zn(2+) as cofactor.

The protein localises to the cytoplasm. The catalysed reaction is tRNA(Ala) + L-alanine + ATP = L-alanyl-tRNA(Ala) + AMP + diphosphate. Functionally, catalyzes the attachment of alanine to tRNA(Ala) in a two-step reaction: alanine is first activated by ATP to form Ala-AMP and then transferred to the acceptor end of tRNA(Ala). Also edits incorrectly charged Ser-tRNA(Ala) and Gly-tRNA(Ala) via its editing domain. This Cutibacterium acnes (strain DSM 16379 / KPA171202) (Propionibacterium acnes) protein is Alanine--tRNA ligase.